The chain runs to 226 residues: Large ribosomal subunit protein uL3 (226 aa).

It belongs to the universal ribosomal protein uL3 family. In terms of assembly, part of the 50S ribosomal subunit. Forms a cluster with proteins L14 and L19.

In terms of biological role, one of the primary rRNA binding proteins, it binds directly near the 3'-end of the 23S rRNA, where it nucleates assembly of the 50S subunit. This is Large ribosomal subunit protein uL3 from Sulfurihydrogenibium sp. (strain YO3AOP1).